The sequence spans 158 residues: Adenosine 5'-monophosphoramidase HNT1 (158 aa).

The HIT domain maps to 26–129 (IFCKIIKSEI…IPKRDEKSGL (104 aa)). AMP-binding positions include 51–52 (DI), N103, 109–111 (HQE), and 116–118 (HFH). Positions 114–118 (HVHFH) match the Histidine triad motif motif. H116 functions as the Tele-AMP-histidine intermediate in the catalytic mechanism.

It belongs to the HINT family. In terms of assembly, homodimer. Interacts with KIN28. The cofactor is Mg(2+).

The enzyme catalyses adenosine 5'-phosphoramidate + H2O = AMP + NH4(+). Its function is as follows. Hydrolyzes adenosine 5'-monophosphoramidate substrates such as AMP-morpholidate, AMP-N-alanine methyl ester, AMP-alpha-acetyl lysine methyl ester and AMP-NH2. Plays a role in the regulation of kinase KIN28 function. Essential for growth on galactose media at elevated temperatures. The sequence is that of Adenosine 5'-monophosphoramidase HNT1 from Saccharomyces cerevisiae (strain ATCC 204508 / S288c) (Baker's yeast).